The sequence spans 124 residues: Profilin-2 (124 aa).

The protein belongs to the profilin family. As to quaternary structure, occurs in many kinds of cells as a complex with monomeric actin in a 1:1 ratio. Interacts with forH.

The protein resides in the cytoplasm. Its subcellular location is the cytoskeleton. In terms of biological role, binds to actin and affects the structure of the cytoskeleton. At high concentrations, profilin prevents the polymerization of actin, whereas it enhances it at low concentrations. By binding to PIP2, it inhibits the formation of IP3 and DG. This is Profilin-2 (proB) from Dictyostelium discoideum (Social amoeba).